We begin with the raw amino-acid sequence, 469 residues long: Adenosylhomocysteinase (469 aa).

3 residues coordinate substrate: T63, D139, and E164. 165–167 contacts NAD(+); the sequence is TTT. The substrate site is built by K194 and D198. Residues N199, 228–233, E251, N300, 321–323, and N375 each bind NAD(+); these read GYGDVG and IGH.

It belongs to the adenosylhomocysteinase family. NAD(+) serves as cofactor.

It is found in the cytoplasm. The catalysed reaction is S-adenosyl-L-homocysteine + H2O = L-homocysteine + adenosine. It functions in the pathway amino-acid biosynthesis; L-homocysteine biosynthesis; L-homocysteine from S-adenosyl-L-homocysteine: step 1/1. In terms of biological role, may play a key role in the regulation of the intracellular concentration of adenosylhomocysteine. This is Adenosylhomocysteinase from Pseudomonas syringae pv. tomato (strain ATCC BAA-871 / DC3000).